Consider the following 170-residue polypeptide: Large ribosomal subunit protein uL10 (170 aa).

This sequence belongs to the universal ribosomal protein uL10 family. As to quaternary structure, part of the ribosomal stalk of the 50S ribosomal subunit. The N-terminus interacts with L11 and the large rRNA to form the base of the stalk. The C-terminus forms an elongated spine to which L12 dimers bind in a sequential fashion forming a multimeric L10(L12)X complex.

Functionally, forms part of the ribosomal stalk, playing a central role in the interaction of the ribosome with GTP-bound translation factors. The polypeptide is Large ribosomal subunit protein uL10 (Novosphingobium aromaticivorans (strain ATCC 700278 / DSM 12444 / CCUG 56034 / CIP 105152 / NBRC 16084 / F199)).